The following is a 449-amino-acid chain: Neuraminidase (449 aa).

Residues methionine 1–lysine 6 are Intravirion-facing. The helical transmembrane segment at isoleucine 7–glycine 27 threads the bilayer. The involved in apical transport and lipid raft association stretch occupies residues glycine 11 to tryptophan 33. The Virion surface segment spans residues asparagine 28–lysine 449. The tract at residues histidine 36 to serine 70 is hypervariable stalk region. The N-linked (GlcNAc...) asparagine; by host glycan is linked to asparagine 68. Residues leucine 71–lysine 449 form a head of neuraminidase region. 8 disulfide bridges follow: cysteine 72-cysteine 397, cysteine 104-cysteine 109, cysteine 164-cysteine 211, cysteine 213-cysteine 218, cysteine 259-cysteine 272, cysteine 261-cysteine 270, cysteine 298-cysteine 315, and cysteine 401-cysteine 426. Arginine 98 contacts substrate. N-linked (GlcNAc...) asparagine; by host glycosylation is present at asparagine 126. Residue aspartate 131 is the Proton donor/acceptor of the active site. Arginine 132 is a substrate binding site. The N-linked (GlcNAc...) asparagine; by host glycan is linked to asparagine 215. Glutamate 257–glutamate 258 contributes to the substrate binding site. Arginine 273 contacts substrate. Ca(2+)-binding residues include aspartate 274, glycine 278, and aspartate 304. Arginine 348 contributes to the substrate binding site. Tyrosine 382 (nucleophile) is an active-site residue.

It belongs to the glycosyl hydrolase 34 family. Homotetramer. Ca(2+) is required as a cofactor. Post-translationally, N-glycosylated.

The protein resides in the virion membrane. It localises to the host apical cell membrane. It catalyses the reaction Hydrolysis of alpha-(2-&gt;3)-, alpha-(2-&gt;6)-, alpha-(2-&gt;8)- glycosidic linkages of terminal sialic acid residues in oligosaccharides, glycoproteins, glycolipids, colominic acid and synthetic substrates.. Inhibited by the neuraminidase inhibitors zanamivir (Relenza) and oseltamivir (Tamiflu). These drugs interfere with the release of progeny virus from infected cells and are effective against all influenza strains. Resistance to neuraminidase inhibitors is quite rare. Functionally, catalyzes the removal of terminal sialic acid residues from viral and cellular glycoconjugates. Cleaves off the terminal sialic acids on the glycosylated HA during virus budding to facilitate virus release. Additionally helps virus spread through the circulation by further removing sialic acids from the cell surface. These cleavages prevent self-aggregation and ensure the efficient spread of the progeny virus from cell to cell. Otherwise, infection would be limited to one round of replication. Described as a receptor-destroying enzyme because it cleaves a terminal sialic acid from the cellular receptors. May facilitate viral invasion of the upper airways by cleaving the sialic acid moieties on the mucin of the airway epithelial cells. Likely to plays a role in the budding process through its association with lipid rafts during intracellular transport. May additionally display a raft-association independent effect on budding. Plays a role in the determination of host range restriction on replication and virulence. Sialidase activity in late endosome/lysosome traffic seems to enhance virus replication. The protein is Neuraminidase of Aves (Cat).